The following is a 116-amino-acid chain: Non-specific lipid transfer protein GPI-anchored 17 (116 aa).

Positions 1 to 24 are cleaved as a signal peptide; that stretch reads MKIGVVLVLLTVFVVVMSSTSVSA. 3 disulfide bridges follow: cysteine 31–cysteine 74, cysteine 42–cysteine 58, and cysteine 59–cysteine 99. The GPI-anchor amidated asparagine moiety is linked to residue asparagine 107. Residues 108–116 constitute a propeptide, removed in mature form; sequence GKNFKNTSL. Residue asparagine 113 is glycosylated (N-linked (GlcNAc...) asparagine).

Belongs to the plant LTP family. In terms of tissue distribution, expressed in seedlings, preferentially in roots.

It is found in the cell membrane. In terms of biological role, probable lipid transfer protein. The polypeptide is Non-specific lipid transfer protein GPI-anchored 17 (Arabidopsis thaliana (Mouse-ear cress)).